The primary structure comprises 85 residues: Transcription factor 4 (85 aa).

A bHLH domain is found at Glu-7 to Leu-60. The interval Gln-62 to Ser-85 is class A specific domain.

As to quaternary structure, efficient DNA binding requires dimerization with another bHLH protein. Forms homo- or heterooligomers with myogenin.

It is found in the nucleus. Its function is as follows. Transcription factor that binds to the immunoglobulin enhancer Mu-E5/KE5-motif. Involved in the initiation of neuronal differentiation. Binds to the E-box present in the somatostatin receptor 2 initiator element (SSTR2-INR) to activate transcription. The polypeptide is Transcription factor 4 (TCF4) (Gallus gallus (Chicken)).